The following is a 418-amino-acid chain: Glutamyl-tRNA reductase (418 aa).

Residues 49–52 (TCNR), Ser-109, 114–116 (EPQ), and Gln-120 contribute to the substrate site. The active-site Nucleophile is the Cys-50. 189–194 (GAGETI) lines the NADP(+) pocket.

This sequence belongs to the glutamyl-tRNA reductase family. As to quaternary structure, homodimer.

It catalyses the reaction (S)-4-amino-5-oxopentanoate + tRNA(Glu) + NADP(+) = L-glutamyl-tRNA(Glu) + NADPH + H(+). Its pathway is porphyrin-containing compound metabolism; protoporphyrin-IX biosynthesis; 5-aminolevulinate from L-glutamyl-tRNA(Glu): step 1/2. Catalyzes the NADPH-dependent reduction of glutamyl-tRNA(Glu) to glutamate 1-semialdehyde (GSA). The chain is Glutamyl-tRNA reductase from Salmonella dublin (strain CT_02021853).